Here is a 473-residue protein sequence, read N- to C-terminus: Argininosuccinate lyase (473 aa).

This sequence belongs to the lyase 1 family. Argininosuccinate lyase subfamily.

The protein resides in the cytoplasm. It catalyses the reaction 2-(N(omega)-L-arginino)succinate = fumarate + L-arginine. Its pathway is amino-acid biosynthesis; L-arginine biosynthesis; L-arginine from L-ornithine and carbamoyl phosphate: step 3/3. This chain is Argininosuccinate lyase, found in Nocardia farcinica (strain IFM 10152).